The following is a 448-amino-acid chain: D-inositol 3-phosphate glycosyltransferase (448 aa).

1D-myo-inositol 3-phosphate is bound by residues histidine 35, 46 to 51 (DAGGLN), lysine 104, tyrosine 137, threonine 161, and arginine 181. Glycine 49 provides a ligand contact to UDP-N-acetyl-alpha-D-glucosamine. The UDP-N-acetyl-alpha-D-glucosamine site is built by arginine 255, lysine 260, and methionine 321. Mg(2+) is bound by residues tyrosine 330, arginine 331, and alanine 333. UDP-N-acetyl-alpha-D-glucosamine contacts are provided by glutamate 343 and glutamate 351. Threonine 357 lines the Mg(2+) pocket.

Belongs to the glycosyltransferase group 1 family. MshA subfamily. As to quaternary structure, homodimer.

The catalysed reaction is 1D-myo-inositol 3-phosphate + UDP-N-acetyl-alpha-D-glucosamine = 1D-myo-inositol 2-acetamido-2-deoxy-alpha-D-glucopyranoside 3-phosphate + UDP + H(+). Catalyzes the transfer of a N-acetyl-glucosamine moiety to 1D-myo-inositol 3-phosphate to produce 1D-myo-inositol 2-acetamido-2-deoxy-glucopyranoside 3-phosphate in the mycothiol biosynthesis pathway. The polypeptide is D-inositol 3-phosphate glycosyltransferase (Acidothermus cellulolyticus (strain ATCC 43068 / DSM 8971 / 11B)).